Reading from the N-terminus, the 81-residue chain is ATP synthase subunit c, chloroplastic (81 aa).

2 consecutive transmembrane segments (helical) span residues 3–23 and 57–77; these read PLVF…ASIG and LAFM…LLFA.

The protein belongs to the ATPase C chain family. F-type ATPases have 2 components, F(1) - the catalytic core - and F(0) - the membrane proton channel. F(1) has five subunits: alpha(3), beta(3), gamma(1), delta(1), epsilon(1). F(0) has four main subunits: a(1), b(1), b'(1) and c(10-14). The alpha and beta chains form an alternating ring which encloses part of the gamma chain. F(1) is attached to F(0) by a central stalk formed by the gamma and epsilon chains, while a peripheral stalk is formed by the delta, b and b' chains.

Its subcellular location is the plastid. It localises to the chloroplast thylakoid membrane. Functionally, f(1)F(0) ATP synthase produces ATP from ADP in the presence of a proton or sodium gradient. F-type ATPases consist of two structural domains, F(1) containing the extramembraneous catalytic core and F(0) containing the membrane proton channel, linked together by a central stalk and a peripheral stalk. During catalysis, ATP synthesis in the catalytic domain of F(1) is coupled via a rotary mechanism of the central stalk subunits to proton translocation. In terms of biological role, key component of the F(0) channel; it plays a direct role in translocation across the membrane. A homomeric c-ring of between 10-14 subunits forms the central stalk rotor element with the F(1) delta and epsilon subunits. This Atropa belladonna (Belladonna) protein is ATP synthase subunit c, chloroplastic.